Reading from the N-terminus, the 495-residue chain is IQ domain-containing protein IQM5 (495 aa).

Positions 89-122 are disordered; that stretch reads ENRGGEEEDERGSSPKRRNRGNLTALSLPAPTPF. The IQ domain maps to 131–160; it reads LDAAAVTLQKVYKSYRTRRNLADCAVVVEE.

In terms of tissue distribution, expressed in roots, rosette and cauline leaves, and at lower levels in stems, flowers and siliques.

Its subcellular location is the cytoplasm. It is found in the nucleus. Its function is as follows. May be involved in biotic and abiotic stress responses. This Arabidopsis thaliana (Mouse-ear cress) protein is IQ domain-containing protein IQM5.